A 376-amino-acid chain; its full sequence is Proton extrusion protein PxcA (376 aa).

4 helical membrane-spanning segments follow: residues 150-170 (TLIS…VQQM), 251-271 (AVKN…VCII), 299-319 (IILF…QVLL), and 334-354 (FILL…KYWI).

The protein belongs to the CemA family.

The protein localises to the cell inner membrane. Its function is as follows. Required for H(+) efflux immediately after light irradiation to form a rapid H(+) concentration gradient across the thylakoid membranes. Together with PxcL, contributes to transient H(+) uptake following dark to light transition. This chain is Proton extrusion protein PxcA, found in Prochlorococcus marinus (strain MIT 9303).